Consider the following 355-residue polypeptide: UDP-N-acetylglucosamine--N-acetylmuramyl-(pentapeptide) pyrophosphoryl-undecaprenol N-acetylglucosamine transferase (355 aa).

UDP-N-acetyl-alpha-D-glucosamine is bound by residues 15–17 (TGG), Asn127, Arg163, Ser191, Ile244, 263–268 (ALTVSE), and Gln288.

This sequence belongs to the glycosyltransferase 28 family. MurG subfamily.

It is found in the cell inner membrane. It carries out the reaction di-trans,octa-cis-undecaprenyl diphospho-N-acetyl-alpha-D-muramoyl-L-alanyl-D-glutamyl-meso-2,6-diaminopimeloyl-D-alanyl-D-alanine + UDP-N-acetyl-alpha-D-glucosamine = di-trans,octa-cis-undecaprenyl diphospho-[N-acetyl-alpha-D-glucosaminyl-(1-&gt;4)]-N-acetyl-alpha-D-muramoyl-L-alanyl-D-glutamyl-meso-2,6-diaminopimeloyl-D-alanyl-D-alanine + UDP + H(+). It participates in cell wall biogenesis; peptidoglycan biosynthesis. In terms of biological role, cell wall formation. Catalyzes the transfer of a GlcNAc subunit on undecaprenyl-pyrophosphoryl-MurNAc-pentapeptide (lipid intermediate I) to form undecaprenyl-pyrophosphoryl-MurNAc-(pentapeptide)GlcNAc (lipid intermediate II). This is UDP-N-acetylglucosamine--N-acetylmuramyl-(pentapeptide) pyrophosphoryl-undecaprenol N-acetylglucosamine transferase from Salmonella paratyphi B (strain ATCC BAA-1250 / SPB7).